The primary structure comprises 277 residues: Undecaprenyl-diphosphatase 1 (277 aa).

7 helical membrane-spanning segments follow: residues 46 to 66 (VVGF…VYFF), 95 to 115 (WWVI…KSLI), 119 to 139 (LASL…MWAA), 165 to 185 (ILAL…TALI), 191 to 211 (VAAT…AGLY), 216 to 236 (ALGT…SFVV), and 256 to 276 (FVIY…TGVL).

The protein belongs to the UppP family.

It is found in the cell membrane. The catalysed reaction is di-trans,octa-cis-undecaprenyl diphosphate + H2O = di-trans,octa-cis-undecaprenyl phosphate + phosphate + H(+). Its function is as follows. Catalyzes the dephosphorylation of undecaprenyl diphosphate (UPP). Confers resistance to bacitracin. The protein is Undecaprenyl-diphosphatase 1 of Streptomyces avermitilis (strain ATCC 31267 / DSM 46492 / JCM 5070 / NBRC 14893 / NCIMB 12804 / NRRL 8165 / MA-4680).